A 142-amino-acid polypeptide reads, in one-letter code: Probable signal recognition particle 19 kDa protein (142 aa).

The segment at 115 to 142 (KTRQPGYTAPSVASSSAAAAGKKNKKKK) is disordered. Over residues 123 to 135 (APSVASSSAAAAG) the composition is skewed to low complexity.

The protein belongs to the SRP19 family. As to quaternary structure, component of a signal recognition particle complex that consists of a 7SL RNA molecule of 300 nucleotides and six protein subunits: srpa-72, srpa-68, SRP54, F37F2.2/SRP19, F25G6.8/SRP14 and ZK512.4/SRP9.

Its subcellular location is the cytoplasm. The protein localises to the nucleus. It localises to the nucleolus. Its function is as follows. Component of the signal recognition particle (SRP) complex, a ribonucleoprotein complex that mediates the cotranslational targeting of secretory and membrane proteins to the endoplasmic reticulum (ER). Binds directly to 7SL RNA. Mediates binding of SRP54 to the SRP complex. The sequence is that of Probable signal recognition particle 19 kDa protein from Caenorhabditis elegans.